A 137-amino-acid chain; its full sequence is Nucleoside diphosphate kinase (137 aa).

Residues lysine 10, phenylalanine 58, arginine 86, threonine 92, arginine 103, and asparagine 113 each contribute to the ATP site. Histidine 116 (pros-phosphohistidine intermediate) is an active-site residue.

It belongs to the NDK family. Homotetramer. Requires Mg(2+) as cofactor.

It localises to the cytoplasm. The enzyme catalyses a 2'-deoxyribonucleoside 5'-diphosphate + ATP = a 2'-deoxyribonucleoside 5'-triphosphate + ADP. It catalyses the reaction a ribonucleoside 5'-diphosphate + ATP = a ribonucleoside 5'-triphosphate + ADP. Its function is as follows. Major role in the synthesis of nucleoside triphosphates other than ATP. The ATP gamma phosphate is transferred to the NDP beta phosphate via a ping-pong mechanism, using a phosphorylated active-site intermediate. The chain is Nucleoside diphosphate kinase from Helicobacter acinonychis (strain Sheeba).